The following is a 364-amino-acid chain: Coproporphyrin III ferrochelatase (364 aa).

Arginine 29 and tyrosine 118 together coordinate Fe-coproporphyrin III. Residues histidine 169 and glutamate 250 each contribute to the Fe(2+) site.

It belongs to the ferrochelatase family.

Its subcellular location is the cytoplasm. The catalysed reaction is Fe-coproporphyrin III + 2 H(+) = coproporphyrin III + Fe(2+). Its pathway is porphyrin-containing compound metabolism; protoheme biosynthesis. Involved in coproporphyrin-dependent heme b biosynthesis. Catalyzes the insertion of ferrous iron into coproporphyrin III to form Fe-coproporphyrin III. The polypeptide is Coproporphyrin III ferrochelatase (Streptococcus pneumoniae (strain ATCC 700669 / Spain 23F-1)).